The sequence spans 746 residues: MAPMLVSLNCGIRVQRRTLTLLIRQTSSYHIWDKSCINNGTNYQRRRTYALNSLHPQRTASWSTNRTENRRQILEAAKHLQVTDKRTCWHGNAGGRLNADPKNVLKEVHSAKILSAMLSYVWPKDRPDLRARVAVSLGLLAGAKLTNVMVPFMFKYAVDELNQMSGHMLNLNDAPSTVATMTTAVLIGYGVSRAGSALFNELRNTVFGKVAQSSIRRIAKNVFLHLHNLDLGFHLSRQTGALSKAIDRGTRGISFVLSALVFNLGPTVFEMFLVSAILYYKCGGEFAAVALGTLSAYTIFTILVTQWRTRFRIEMNKADNEAGNAAIDSLLNYETVKYFNNEKYEAERYDGYLKLYESSSLKTTSTLAMLNFGQSAIFSVGLTAIMLLASKGIAAGNMTVGDLVMVNGLLFQLSLPLNFLGTVYRETRQALIDMNTLFTLLNVDTKIKEKDLAPPLAVTPQDATIRFEDVYFEYMEGQKVLNGVSFEVPAGKKVAIVGGSGSGKSTIVRLLFRFYEPQQGNIYISGQNIRDVSLESLRKALGVVPQDAVLFHNNIFYNLQYGNINATPEEVYQVARLAGLHDAILRMPHGYDTQVGERGLKLSGGEKQRVAIARAILKNPPILLYDEATSSLDSITEENIMTSMKEMVKDRTSVFIAHRLSTIVDADEILVLSQGKVAERGTHQALLDTPGSLYAELWNAQNSKILNSRKSSSAPAAERLSQKEEERKKLQEEILNSVKGCGNCSC.

Residues 1–19 (MAPMLVSLNCGIRVQRRTL) constitute a mitochondrion transit peptide. The Mitochondrial matrix segment spans residues 20-133 (TLLIRQTSSY…KDRPDLRARV (114 aa)). The ABC transmembrane type-1 domain maps to 133 to 429 (VAVSLGLLAG…LGTVYRETRQ (297 aa)). The helical transmembrane segment at 134-154 (AVSLGLLAGAKLTNVMVPFMF) threads the bilayer. Residues 155–176 (KYAVDELNQMSGHMLNLNDAPS) are Mitochondrial intermembrane-facing. The helical transmembrane segment at 177–199 (TVATMTTAVLIGYGVSRAGSALF) threads the bilayer. The Mitochondrial matrix portion of the chain corresponds to 200-252 (NELRNTVFGKVAQSSIRRIAKNVFLHLHNLDLGFHLSRQTGALSKAIDRGTRG). A helical membrane pass occupies residues 253 to 273 (ISFVLSALVFNLGPTVFEMFL). Residues 274–283 (VSAILYYKCG) are Mitochondrial intermembrane-facing. A helical membrane pass occupies residues 284–304 (GEFAAVALGTLSAYTIFTILV). Residues 305-375 (TQWRTRFRIE…TLAMLNFGQS (71 aa)) lie on the Mitochondrial matrix side of the membrane. Glutathione is bound by residues 308 to 312 (RTRFR) and 371 to 374 (NFGQ). The chain crosses the membrane as a helical span at residues 376-396 (AIFSVGLTAIMLLASKGIAAG). Residues 397–402 (NMTVGD) lie on the Mitochondrial intermembrane side of the membrane. Residues 403 to 423 (LVMVNGLLFQLSLPLNFLGTV) traverse the membrane as a helical segment. G421 is a glutathione binding site. The Mitochondrial matrix portion of the chain corresponds to 424–746 (YRETRQALID…SVKGCGNCSC (323 aa)). The 235-residue stretch at 465–699 (IRFEDVYFEY…PGSLYAELWN (235 aa)) folds into the ABC transporter domain. ATP-binding positions include Y474 and 498–505 (GGSGSGKS). A disordered region spans residues 708-728 (SRKSSSAPAAERLSQKEEERK).

Belongs to the ABC transporter superfamily. ABCB family. Heavy Metal importer (TC 3.A.1.210) subfamily. In terms of assembly, homodimer.

It is found in the mitochondrion inner membrane. It localises to the mitochondrion. It catalyses the reaction (glutathione)4[2Fe(III)-2S] cluster(in) + ATP + H2O = (glutathione)4[2Fe(III)-2S] cluster(out) + ADP + phosphate + H(+). Its function is as follows. Exports glutathione-coordinated iron-sulfur clusters such as [2Fe-2S]-(GS)4 cluster from the mitochondria to the cytosol in an ATP-dependent manner allowing the assembly of the cytosolic iron-sulfur (Fe/S) cluster-containing proteins and participates in iron homeostasis. May play a role in iron and lipid metabolism. In Oryzias latipes (Japanese rice fish), this protein is Iron-sulfur clusters transporter ABCB7, mitochondrial.